The chain runs to 93 residues: Small ribosomal subunit protein uS19 (93 aa).

Belongs to the universal ribosomal protein uS19 family.

Its function is as follows. Protein S19 forms a complex with S13 that binds strongly to the 16S ribosomal RNA. The sequence is that of Small ribosomal subunit protein uS19 from Syntrophus aciditrophicus (strain SB).